The sequence spans 73 residues: DNA-binding protein S1FA3 (73 aa).

Residues Pro-47–Lys-52 carry the Nuclear localization signal motif. Residues Pro-47–Lys-63 are compositionally biased toward basic residues. The tract at residues Pro-47 to Glu-73 is disordered.

Belongs to the S1FA transcription factor family.

The protein localises to the nucleus. In terms of biological role, DNA-binding protein that specifically recognizes a negative element (S1F) within the RPS1 promoter. The chain is DNA-binding protein S1FA3 (S1FA3) from Arabidopsis thaliana (Mouse-ear cress).